The primary structure comprises 266 residues: Phosphatidylglycerol--prolipoprotein diacylglyceryl transferase (266 aa).

4 helical membrane passes run 14–34 (FGPLQIHWYGLMYLAGFAFFW), 55–75 (FLFYGALGVILGGRIGYILFY), 91–111 (WKGGMAFHGGLIGVMVAMWLF), and 117–137 (VSMFVVADFVAPMVPVGLFFG). A 1,2-diacyl-sn-glycero-3-phospho-(1'-sn-glycerol) is bound at residue Arg-138. 3 helical membrane-spanning segments follow: residues 172 to 192 (YPTQLLEALLEGIVLFIILMF), 201 to 221 (GAASGLFIGLYGLFRFYVEFF), and 235 to 255 (WVTMGQLLSLPMILIGFALVV).

The protein belongs to the Lgt family.

The protein resides in the cell inner membrane. It catalyses the reaction L-cysteinyl-[prolipoprotein] + a 1,2-diacyl-sn-glycero-3-phospho-(1'-sn-glycerol) = an S-1,2-diacyl-sn-glyceryl-L-cysteinyl-[prolipoprotein] + sn-glycerol 1-phosphate + H(+). The protein operates within protein modification; lipoprotein biosynthesis (diacylglyceryl transfer). Its function is as follows. Catalyzes the transfer of the diacylglyceryl group from phosphatidylglycerol to the sulfhydryl group of the N-terminal cysteine of a prolipoprotein, the first step in the formation of mature lipoproteins. This Hydrogenovibrio crunogenus (strain DSM 25203 / XCL-2) (Thiomicrospira crunogena) protein is Phosphatidylglycerol--prolipoprotein diacylglyceryl transferase.